We begin with the raw amino-acid sequence, 137 residues long: Phosphoribosyl-AMP cyclohydrolase (137 aa).

Asp-83 provides a ligand contact to Mg(2+). Zn(2+) is bound at residue Cys-84. Mg(2+) contacts are provided by Asp-85 and Asp-87. Cys-101 and Cys-108 together coordinate Zn(2+).

This sequence belongs to the PRA-CH family. Homodimer. It depends on Mg(2+) as a cofactor. Zn(2+) serves as cofactor.

It is found in the cytoplasm. It catalyses the reaction 1-(5-phospho-beta-D-ribosyl)-5'-AMP + H2O = 1-(5-phospho-beta-D-ribosyl)-5-[(5-phospho-beta-D-ribosylamino)methylideneamino]imidazole-4-carboxamide. The protein operates within amino-acid biosynthesis; L-histidine biosynthesis; L-histidine from 5-phospho-alpha-D-ribose 1-diphosphate: step 3/9. Catalyzes the hydrolysis of the adenine ring of phosphoribosyl-AMP. The chain is Phosphoribosyl-AMP cyclohydrolase from Burkholderia mallei (strain ATCC 23344).